A 148-amino-acid chain; its full sequence is Ribonuclease H (148 aa).

The region spanning methionine 1–glutamate 143 is the RNase H type-1 domain. Mg(2+)-binding residues include aspartate 9, glutamate 47, aspartate 69, and aspartate 135.

It belongs to the RNase H family. In terms of assembly, monomer. Mg(2+) is required as a cofactor.

The protein localises to the cytoplasm. The catalysed reaction is Endonucleolytic cleavage to 5'-phosphomonoester.. Functionally, endonuclease that specifically degrades the RNA of RNA-DNA hybrids. The sequence is that of Ribonuclease H from Acidovorax sp. (strain JS42).